A 102-amino-acid polypeptide reads, in one-letter code: uncharacterized protein (102 aa).

Residues 36-55 (IISLLAIFIKMCLWLWKQFL) traverse the membrane as a helical segment.

Its subcellular location is the membrane. This is an uncharacterized protein from Homo sapiens (Human).